Reading from the N-terminus, the 428-residue chain is Elongation factor 1-alpha (428 aa).

The 211-residue stretch at 5 to 215 folds into the tr-type G domain; that stretch reads KPHVNIVFIG…ALDQIPEPPK (211 aa). The segment at 14–21 is G1; the sequence is GHVDHGKS. 14 to 21 is a GTP binding site; it reads GHVDHGKS. Residue serine 21 coordinates Mg(2+). The segment at 68–72 is G2; sequence GITID. Residues 89–92 are G3; that stretch reads DAPG. GTP contacts are provided by residues 89–93 and 144–147; these read DAPGH and NKMD. The tract at residues 144–147 is G4; the sequence is NKMD. Residues 181–183 form a G5 region; that stretch reads SAW.

The protein belongs to the TRAFAC class translation factor GTPase superfamily. Classic translation factor GTPase family. EF-Tu/EF-1A subfamily.

Its subcellular location is the cytoplasm. The enzyme catalyses GTP + H2O = GDP + phosphate + H(+). GTP hydrolase that promotes the GTP-dependent binding of aminoacyl-tRNA to the A-site of ribosomes during protein biosynthesis. In Thermococcus gammatolerans (strain DSM 15229 / JCM 11827 / EJ3), this protein is Elongation factor 1-alpha.